Reading from the N-terminus, the 715-residue chain is L-type lectin-domain containing receptor kinase VIII.1 (715 aa).

A signal peptide spans 1-21; sequence MSLFLSFFISILLCFFNGATT. The interval 22–247 is legume-lectin like; it reads TQFDFSTLAI…IHSIEWWSFS (226 aa). Topologically, residues 22 to 317 are extracellular; it reads TQFDFSTLAI…SRFCKENPGT (296 aa). N126 and N195 each carry an N-linked (GlcNAc...) asparagine glycan. The interval 255-296 is disordered; the sequence is GSGSGSPPPRANLMNPKANSVKSPPPLASQPSSSAIPISSNT. The span at 283–296 shows a compositional bias: low complexity; it reads SQPSSSAIPISSNT. A helical transmembrane segment spans residues 318-338; sequence IAGVVTAGAFFLALFAGALFW. Residues 339 to 715 lie on the Cytoplasmic side of the membrane; that stretch reads VYSKKFKRVE…IIRSDDDHLV (377 aa). In terms of domain architecture, Protein kinase spans 376 to 676; it reads FNESRIIGHG…MSFSTSHLLL (301 aa). ATP is bound by residues 382 to 390 and K405; that span reads IGHGAFGVV. D500 (proton acceptor) is an active-site residue.

This sequence in the C-terminal section; belongs to the protein kinase superfamily. Ser/Thr protein kinase family. In the N-terminal section; belongs to the leguminous lectin family.

The protein localises to the cell membrane. The catalysed reaction is L-seryl-[protein] + ATP = O-phospho-L-seryl-[protein] + ADP + H(+). The enzyme catalyses L-threonyl-[protein] + ATP = O-phospho-L-threonyl-[protein] + ADP + H(+). In Arabidopsis thaliana (Mouse-ear cress), this protein is L-type lectin-domain containing receptor kinase VIII.1 (LECRK81).